A 501-amino-acid polypeptide reads, in one-letter code: Sucrose-6-phosphate hydrolase (501 aa).

Substrate is bound by residues 44–47 (LLND), Q63, 106–107 (YT), 167–168 (RD), and E222. The active site involves D47.

The protein belongs to the glycosyl hydrolase 32 family.

It catalyses the reaction Hydrolysis of terminal non-reducing beta-D-fructofuranoside residues in beta-D-fructofuranosides.. Its pathway is glycan biosynthesis; sucrose metabolism. This is Sucrose-6-phosphate hydrolase (scrB) from Pediococcus pentosaceus.